A 2258-amino-acid polypeptide reads, in one-letter code: MAPGEIIIFELCQAVQEFLLLYNKETVSLHEEMIKRLNTNINRVNSSDDINNNNNNNNDDDDDNDDYDDSDDENSDSDYDDYDDSDDENSDDEFYSDDEDYNTRHQMGDIGSSVNKIINSIDHTISHGGGVGVGIGSGNGLFSKSSSSSSPMIPYNFSFDSLNGFDPDIIFEDSFQTPLKGSSSIDFEEMNNLTNSNNSNSTATTTTTTTTNNNNNNNTNNNNNNNSNNNNNNNNNNNNTNNNTNNNNNNNNNNNNNNNNNNNNNNNNNNNSNNNNNISNNKINKINNNNNNKELIDNNNNNKDKENDLINDTIPKIKWKKGSCIERKSNYSVYRGVDEDTDRKLICKIVNLNIDDRSSSSLTSLSNSNNNNSNNNNNNNNNNNNNNNNNNNNNNNNNLSIDVVELKKRLIEKVKMIQKEIESMKYLGNPYIIKYLGTNFQEGQNTLYIFQEYNSTLTLQQKILSNGIGFEESQVKKFTYQLLLGLLYLHSQHIPHRDFKSHNIFFNQSTSKMLLSNYGGRNIKIFDHFEKLNSLKNLNSWISSTNNSINNINNINNNNNNNNNNINTTTTQNQINNEIDRREDIINLGIVVLEMLCGSDLANNQTVLIYLAQLNLLNNQQQNQNFIQPPPLQYQLQQQYDLIKEIEQKTHPSSPISNNAKDFLSLCFTINGNGSTNDSLEAGILLKHPFLASNSNSTPPPSNFLNFTNNIKFLDQRSAATQALLSSPHSLIPQPIQTLIKSQTPNNNNDNNNLASSNELLSSSNGSNIDLRSTNSSIVSNPLATSSSLDNITPPPSRPISPKPSPLNKRNQKLQTSQQKPPLSPPQTPLKQIPQSPQSPPQQNFNTPPTTTTTTTTPTATPTTPTMTPLTPIQKQQQIDYDMFRYHSRYRTDFEEIEMIGKGGFGVVVKSRNKLDCRYYAIKKIKTKGYTDSNQEPLTNKLLREVTTLSRLHHQFVVRYYQAWIEKSCDSFQSLEEGNEDLSGDLETDASEDWFMQSSINSRSIISRDSYSGLSTSNSNVGGVNNTAGGGDSVSNANSNKSMIVGNSNKKLTLSSSNTSSSSSLLSNNKSKILNTSKSTSTNTSTSTSTSNTNKNKKISKKKKSKLSPLMKPKNKKNKNNGESEQSSSDSENGENGMKSRIIENASDSYSDDDNNNNNNNDNNNNYHSDNESDSFSGSISMSDGNGSGYEATDDEDIINNSGSFDENENDDDDEEDDDDEYDEEDDDYETFDFQDKSRVVSNNSKLSTSSSRKKPPKETHTLYIQMEYCSKKTLKTLIDNVGGIAEEEAFRLLRQIVEGLNHIHSQQIIHRDLKPANIFIDNEQNVKIGDFGLATSGAPVSKSDDLNSSTSNTANNINLSSSTNSTAQQTPMWDLNDENLSMTGGVGTPFYCCPEILEKNTKHYGTKVDMYSLGIIFFEMCFQFQTQMERSNILRDLRDNLKFPPGFESTKPDQTQIIRSLLSRDPTQRPSTKQLLESGLLPSKMEDDILKEAIKTIANPTISLFSYLMEKLFCLSNDEHIMSRYLYTSNPSLTPMHLICREKTFSRLEKIFLNHGSIRIDTPTLFPKNPTNSTHPGAANVAKFLDESGTVVYLPYDLTIPWARHVVIHNIQQAKRYTFSKVYRRSQPGFSPKELYECDFDIIGPSKSRHISDAETLRIIIEIMEEFKDELFGNNSGSNSGSGSGGSINYKIRINHYGLLDSILSECGVEKRFFTVVYQTVAQLHWRLNWAQVAQSLKEHGLSASIVSNISTYFRQRGELAQCVTQLESLLANHKEATTGISDLKILVRNLQMINIIPRFLLDLSLIHNHQYYEGLVFQAYIERPTLSNPSRTEIIMSGGRYDKLIKSLHPNPSLSNNIVSGVGVTLACEKIVNSVLNYRQHLLNNCFNTTYTRRNKDPPNSNNNPNNNNLNNNVSIFTKFQSHIEVFVCSLGSSLLGEKLQVASQLWSAGIKADYSQTDYYSSEDIYSNCRENGIPWVVILREKAFQIGKLKVKQIETRQERTVARKDLVDFFLKSRKHNVDSKNIIQNTSSSDLSNLIGGINNSGSGGSGGSGGGSSMSSGGGGGGNSNIGGSDHHHHGHHSNQSTSSSGNSNNSNTQQTSPIQHHVHFSNTKSIIGSSGIISNATFSGGSSSSSNIIHFDEPTDSFSTQIVYQGVEEIKKSKIETLVQTSLSKLFRGFIQSKSSTIRVIVTDLAYSVIRDLQISESHDNISKFQRVSKEKLLQLKNQIFKWKVYPFIVIHSIKDDKSVIFNSVV.

2 disordered regions span residues 43-108 (RVNS…HQMG) and 189-308 (EMNN…KEND). Residues 45 to 57 (NSSDDINNNNNNN) are compositionally biased toward low complexity. The span at 58–100 (NDDDDDNDDYDDSDDENSDSDYDDYDDSDDENSDDEFYSDDED) shows a compositional bias: acidic residues. Over residues 191–301 (NNLTNSNNSN…NKELIDNNNN (111 aa)) the composition is skewed to low complexity. A coiled-coil region spans residues 273 to 309 (NNNNNISNNKINKINNNNNNKELIDNNNNNKDKENDL). Residues 319–691 (WKKGSCIERK…AGILLKHPFL (373 aa)) enclose the Protein kinase 1 domain. ATP-binding positions include 325–333 (IERKSNYSV) and Lys-348. The tract at residues 358-398 (SSSSLTSLSNSNNNNSNNNNNNNNNNNNNNNNNNNNNNNNN) is disordered. Positions 359-398 (SSSLTSLSNSNNNNSNNNNNNNNNNNNNNNNNNNNNNNNN) are enriched in low complexity. The active-site Proton acceptor is the Asp-498. Disordered stretches follow at residues 741–768 (KSQT…NGSN) and 782–870 (PLAT…MTPL). Low complexity predominate over residues 746 to 768 (NNNNDNNNLASSNELLSSSNGSN). Positions 782-791 (PLATSSSLDN) are enriched in polar residues. A compositionally biased stretch (pro residues) spans 793 to 805 (TPPPSRPISPKPS). Residues 841–870 (PQQNFNTPPTTTTTTTTPTATPTTPTMTPL) show a composition bias toward low complexity. Residues 894–1482 (FEEIEMIGKG…TKQLLESGLL (589 aa)) enclose the Protein kinase 2 domain. Residues 900 to 908 (IGKGGFGVV) and Lys-923 each bind ATP. Over residues 1053–1094 (TLSSSNTSSSSSLLSNNKSKILNTSKSTSTNTSTSTSTSNTN) the composition is skewed to low complexity. A disordered region spans residues 1053 to 1259 (TLSSSNTSSS…SSSRKKPPKE (207 aa)). Basic residues predominate over residues 1095 to 1106 (KNKKISKKKKSK). Residues 1156-1185 (NNNNNNDNNNNYHSDNESDSFSGSISMSDG) show a composition bias toward low complexity. A compositionally biased stretch (acidic residues) spans 1206–1233 (DENENDDDDEEDDDDEYDEEDDDYETFD). A compositionally biased stretch (low complexity) spans 1242–1251 (SNNSKLSTSS). Asp-1313 functions as the Proton acceptor in the catalytic mechanism. Disordered regions lie at residues 1343 to 1370 (KSDD…TAQQ) and 2048 to 2104 (GSGG…QQTS). Positions 1347–1368 (LNSSTSNTANNINLSSSTNSTA) are enriched in low complexity. The segment covering 2048–2072 (GSGGSGGSGGGSSMSSGGGGGGNSN) has biased composition (gly residues). The span at 2085–2099 (SNQSTSSSGNSNNSN) shows a compositional bias: low complexity.

Belongs to the protein kinase superfamily. Ser/Thr protein kinase family.

It carries out the reaction L-seryl-[protein] + ATP = O-phospho-L-seryl-[protein] + ADP + H(+). The enzyme catalyses L-threonyl-[protein] + ATP = O-phospho-L-threonyl-[protein] + ADP + H(+). Its function is as follows. Phosphorylates eIF2-alpha, from 1 to 7 hours after the onset of development or during the preaggregation state, resulting in a shift from polysomes to free ribosomes for bulk mRNA. The chain is Probable serine/threonine-protein kinase ifkA (ifkA) from Dictyostelium discoideum (Social amoeba).